Reading from the N-terminus, the 329-residue chain is MSAFFDLLKSQTASHPPIWLLRQVGRYMPPYQELKGSQSLKTFFHNTEAIVEATLLGPSLLHVDAAILFADILSILDGFAVTYDFAPGPRIQFSPEQPFTFTSDPQTIFSYLLDAIRTLKQKLPVPLIVFAASPFTLACYLIDGGASKDFSKTMSFLYVYPEKFDQLISTIIEGTAIYLKTQMDAGAAAVQLFESSSLRLPSALFTRYVTEPNRRLIAKLKEQAIPVSLFCRCFEENFYTLQATQADTLHPDYHVDLHRIQKNLMLSLQGNLDPAIFLLPQEKLLHYVEAFLVPLRTYPNFIFNSGHGILPETPLENVQLVVSYVQRQL.

Substrate is bound by residues 22–26 (RQVGR), D71, Y140, S195, and H307.

This sequence belongs to the uroporphyrinogen decarboxylase family. As to quaternary structure, homodimer.

The protein resides in the cytoplasm. The enzyme catalyses uroporphyrinogen III + 4 H(+) = coproporphyrinogen III + 4 CO2. It functions in the pathway porphyrin-containing compound metabolism; protoporphyrin-IX biosynthesis; coproporphyrinogen-III from 5-aminolevulinate: step 4/4. Its function is as follows. Catalyzes the decarboxylation of four acetate groups of uroporphyrinogen-III to yield coproporphyrinogen-III. The protein is Uroporphyrinogen decarboxylase of Chlamydia pneumoniae (Chlamydophila pneumoniae).